The following is a 158-amino-acid chain: Inorganic pyrophosphatase (158 aa).

Glutamate 8 provides a ligand contact to Mg(2+). Substrate contacts are provided by lysine 16, arginine 30, and tyrosine 42. Aspartate 52, aspartate 57, aspartate 84, and aspartate 89 together coordinate Mg(2+). Catalysis depends on aspartate 89, which acts as the Proton acceptor. Tyrosine 125 contributes to the substrate binding site.

It belongs to the PPase family. As to quaternary structure, homohexamer. Mg(2+) serves as cofactor.

Its subcellular location is the cytoplasm. It carries out the reaction diphosphate + H2O = 2 phosphate + H(+). In terms of biological role, catalyzes the hydrolysis of inorganic pyrophosphate (PPi) forming two phosphate ions. The sequence is that of Inorganic pyrophosphatase from Corynebacterium efficiens (strain DSM 44549 / YS-314 / AJ 12310 / JCM 11189 / NBRC 100395).